The following is a 280-amino-acid chain: Phosphonates import ATP-binding protein PhnC 1 (280 aa).

Residues 2–246 (LRIENLDKRY…VLTRIYGEED (245 aa)) form the ABC transporter domain. 35–42 (GPSGAGKS) lines the ATP pocket. Positions 247-266 (WSKTSDEDADSVDAPPRAAD) are disordered.

The protein belongs to the ABC transporter superfamily. Phosphonates importer (TC 3.A.1.9.1) family. In terms of assembly, the complex is composed of two ATP-binding proteins (PhnC), two transmembrane proteins (PhnE) and a solute-binding protein (PhnD).

Its subcellular location is the cell inner membrane. It catalyses the reaction phosphonate(out) + ATP + H2O = phosphonate(in) + ADP + phosphate + H(+). In terms of biological role, part of the ABC transporter complex PhnCDE involved in phosphonates import. Responsible for energy coupling to the transport system. This chain is Phosphonates import ATP-binding protein PhnC 1, found in Rhodopseudomonas palustris (strain HaA2).